The sequence spans 126 residues: Fluoride-specific ion channel FluC (126 aa).

The next 4 membrane-spanning stretches (helical) occupy residues 9–29, 35–55, 63–83, and 94–114; these read LAVF…GFQL, LTAT…LYAI, LLHL…SFVL, and WSIG…AAIL. Residues Gly73 and Ser76 each coordinate Na(+).

The protein belongs to the fluoride channel Fluc/FEX (TC 1.A.43) family.

It is found in the cell inner membrane. It carries out the reaction fluoride(in) = fluoride(out). Its activity is regulated as follows. Na(+) is not transported, but it plays an essential structural role and its presence is essential for fluoride channel function. Its function is as follows. Fluoride-specific ion channel. Important for reducing fluoride concentration in the cell, thus reducing its toxicity. The chain is Fluoride-specific ion channel FluC from Ruegeria pomeroyi (strain ATCC 700808 / DSM 15171 / DSS-3) (Silicibacter pomeroyi).